The sequence spans 26 residues: Small toxic protein ShoB (26 aa).

Residues 7–24 form a helical membrane-spanning segment; it reads LIKRVIKIIIAVLQLILL.

It localises to the membrane. Toxic component of a type I toxin-antitoxin (TA) system. May be a toxic protein; overexpression causes cessation of growth and rapid membrane depolarization. Overexpression induces stress-response and a number of membrane protein genes. The polypeptide is Small toxic protein ShoB (shoB) (Escherichia coli (strain K12)).